The chain runs to 615 residues: Zinc metalloproteinase R519 (615 aa).

The Peptidase M13 domain occupies 1 to 611; sequence MTYRSCIPQN…LDPQLRSRIL (611 aa). His-454 provides a ligand contact to Zn(2+). Glu-455 is an active-site residue. Zn(2+) contacts are provided by His-458 and Glu-513. Asp-517 functions as the Proton donor in the catalytic mechanism.

This sequence belongs to the peptidase M13 family. Requires Zn(2+) as cofactor.

Functionally, zinc metalloprotease. The polypeptide is Zinc metalloproteinase R519 (Acanthamoeba polyphaga (Amoeba)).